The primary structure comprises 204 residues: MMQDVSSSPVSPADDSLSNSEEEPDRQQPPSGKRGGRKRRSSRRSAGGGAGPGGAAGGGVGGGDEPGSPAQGKRGKKSAGCGGGGSAGGGGGGGSSSGGGSPQSYEELQTQRVMANVRERQRTQSLNEAFAALRKIIPTLPSDKLSKIQTLKLAARYIDFLYQVLQSDELDSKMASCSYVAHERFSYAFSVWRMEGAWSMSASH.

Over residues 1 to 18 the composition is skewed to low complexity; the sequence is MMQDVSSSPVSPADDSLS. The segment at 1–107 is disordered; that stretch reads MMQDVSSSPV…GGGSPQSYEE (107 aa). The span at 34–43 shows a compositional bias: basic residues; the sequence is RGGRKRRSSR. 2 stretches are compositionally biased toward gly residues: residues 46–65 and 80–101; these read AGGGAGPGGAAGGGVGGGDE and GCGGGGSAGGGGGGGSSSGGGS. Residues 110 to 161 form the bHLH domain; it reads TQRVMANVRERQRTQSLNEAFAALRKIIPTLPSDKLSKIQTLKLAARYIDFL. Positions 163–193 are sufficient for transactivation activity; the sequence is QVLQSDELDSKMASCSYVAHERFSYAFSVWR.

In terms of assembly, efficient DNA binding requires dimerization with another bHLH protein. Homodimer or heterodimer with E proteins such as TCF3. ID1 binds preferentially to TCF3 but does not interact efficiently with TWIST1 so ID1 levels control the amount of TCF3 available to dimerize with TWIST and thus determine the type of dimer formed.

Its subcellular location is the nucleus. In terms of biological role, acts as a transcriptional regulator. Inhibits myogenesis by sequestrating E proteins, inhibiting trans-activation by MEF2, and inhibiting DNA-binding by MYOD1 through physical interaction. This interaction probably involves the basic domains of both proteins. Also represses expression of pro-inflammatory cytokines such as TNFA and IL1B. Regulates cranial suture patterning and fusion. Activates transcription as a heterodimer with E proteins. Regulates gene expression differentially, depending on dimer composition. Homodimers induce expression of FGFR2 and POSTN while heterodimers repress FGFR2 and POSTN expression and induce THBS1 expression. Heterodimerization is also required for osteoblast differentiation. Represses the activity of the circadian transcriptional activator: NPAS2-BMAL1 heterodimer. The sequence is that of Twist-related protein 1 (TWIST1) from Nomascus concolor (Black crested gibbon).